Reading from the N-terminus, the 347-residue chain is Spermidine/putrescine import ATP-binding protein PotA (347 aa).

The ABC transporter domain maps to 6-238; the sequence is LEIKNLSHYY…PKTKFVADFI (233 aa). ATP is bound at residue 40 to 47; that stretch reads GPSGCGKT.

The protein belongs to the ABC transporter superfamily. Spermidine/putrescine importer (TC 3.A.1.11.1) family. The complex is composed of two ATP-binding proteins (PotA), two transmembrane proteins (PotB and PotC) and a solute-binding protein (PotD).

Its subcellular location is the cell inner membrane. It catalyses the reaction ATP + H2O + polyamine-[polyamine-binding protein]Side 1 = ADP + phosphate + polyamineSide 2 + [polyamine-binding protein]Side 1.. In terms of biological role, part of the ABC transporter complex PotABCD involved in spermidine/putrescine import. Responsible for energy coupling to the transport system. In Borreliella afzelii (strain PKo) (Borrelia afzelii), this protein is Spermidine/putrescine import ATP-binding protein PotA.